Here is a 649-residue protein sequence, read N- to C-terminus: Phosphomethylpyrimidine synthase (649 aa).

Substrate contacts are provided by residues Asn-235, Met-264, Tyr-293, His-329, 349–351, 390–393, and Glu-429; these read SRG and DGLR. His-433 is a Zn(2+) binding site. Residue Tyr-456 participates in substrate binding. Residue His-497 participates in Zn(2+) binding. Residues Cys-577, Cys-580, and Cys-585 each contribute to the [4Fe-4S] cluster site. Residues 620–649 are disordered; sequence GMRQKSQEFRDTGSELYHPAVGAKEAQLEE. The segment covering 621 to 632 has biased composition (basic and acidic residues); it reads MRQKSQEFRDTG.

This sequence belongs to the ThiC family. As to quaternary structure, homodimer. [4Fe-4S] cluster serves as cofactor.

The catalysed reaction is 5-amino-1-(5-phospho-beta-D-ribosyl)imidazole + S-adenosyl-L-methionine = 4-amino-2-methyl-5-(phosphooxymethyl)pyrimidine + CO + 5'-deoxyadenosine + formate + L-methionine + 3 H(+). The protein operates within cofactor biosynthesis; thiamine diphosphate biosynthesis. Functionally, catalyzes the synthesis of the hydroxymethylpyrimidine phosphate (HMP-P) moiety of thiamine from aminoimidazole ribotide (AIR) in a radical S-adenosyl-L-methionine (SAM)-dependent reaction. This is Phosphomethylpyrimidine synthase from Vibrio atlanticus (strain LGP32) (Vibrio splendidus (strain Mel32)).